Reading from the N-terminus, the 1494-residue chain is Serine/threonine-protein kinase VPS15 (1494 aa).

The N-myristoyl glycine moiety is linked to residue Gly2. A Protein kinase domain is found at 27 to 307 (LVLKEVLGRG…VFPNYFSPFL (281 aa)). Residues 33–41 (LGRGRFLKS) and Lys54 contribute to the ATP site. Catalysis depends on Asp149, which acts as the Proton acceptor. HEAT repeat units lie at residues 383-421 (NSKD…LYDS), 480-517 (DRLQ…LVRD), 524-562 (KIFP…TAYG), 610-646 (KTIA…FFGQ), 648-685 (QSND…FVGQ), 687-724 (SVEE…SSFL), and 727-764 (RALL…CLGA). Disordered stretches follow at residues 859–903 (QSVE…TVEL) and 1037–1064 (SASV…SVPD). The span at 1037-1047 (SASVTSEDASS) shows a compositional bias: low complexity. WD repeat units lie at residues 1079–1118 (EHRS…KDIS), 1127–1166 (LEGS…RGLG), 1184–1226 (KEGA…DAWT), 1231–1270 (PEEG…PVNS), 1276–1323 (ICPI…CHQV), 1371–1409 (PRLP…RSYC), and 1466–1494 (DSVQ…KVWK).

The protein belongs to the protein kinase superfamily. Ser/Thr protein kinase family. In terms of assembly, interacts with VPS34. Component of a complex made of VPS38/USL1 and PI3K main subunits such as VPS15, ATG6/VPS30 and VPS34. In terms of processing, autophosphorylated. Mainly expressed in anthers, pollen grains and pollen tubes, and, to a lower extent, in other tissues and organs including seedlings, roots, stems, leaves, flowers, pitils and siliques.

It is found in the cytoplasm. The protein resides in the golgi apparatus. The protein localises to the trans-Golgi network membrane. Its subcellular location is the endosome membrane. It carries out the reaction L-seryl-[protein] + ATP = O-phospho-L-seryl-[protein] + ADP + H(+). The enzyme catalyses L-threonyl-[protein] + ATP = O-phospho-L-threonyl-[protein] + ADP + H(+). Functionally, serine/threonine-protein kinase required for cytoplasm to vacuole transport (Cvt) and autophagy as a part of the autophagy-specific VPS34 PI3-kinase complex I. Required for pollen development and germination, probably via the modulation of phosphatidylinositol 3-phosphate (PI3P) formation and vacuolar organization. The polypeptide is Serine/threonine-protein kinase VPS15 (Arabidopsis thaliana (Mouse-ear cress)).